The primary structure comprises 268 residues: Tryptophan synthase alpha chain (268 aa).

Residues glutamate 49 and aspartate 60 each act as proton acceptor in the active site.

Belongs to the TrpA family. As to quaternary structure, tetramer of two alpha and two beta chains.

It carries out the reaction (1S,2R)-1-C-(indol-3-yl)glycerol 3-phosphate + L-serine = D-glyceraldehyde 3-phosphate + L-tryptophan + H2O. It functions in the pathway amino-acid biosynthesis; L-tryptophan biosynthesis; L-tryptophan from chorismate: step 5/5. The alpha subunit is responsible for the aldol cleavage of indoleglycerol phosphate to indole and glyceraldehyde 3-phosphate. This Haemophilus influenzae (strain ATCC 51907 / DSM 11121 / KW20 / Rd) protein is Tryptophan synthase alpha chain.